The chain runs to 346 residues: Phosphate acyltransferase (346 aa).

It belongs to the PlsX family. Homodimer. Probably interacts with PlsY.

It localises to the cytoplasm. It carries out the reaction a fatty acyl-[ACP] + phosphate = an acyl phosphate + holo-[ACP]. Its pathway is lipid metabolism; phospholipid metabolism. Functionally, catalyzes the reversible formation of acyl-phosphate (acyl-PO(4)) from acyl-[acyl-carrier-protein] (acyl-ACP). This enzyme utilizes acyl-ACP as fatty acyl donor, but not acyl-CoA. This Delftia acidovorans (strain DSM 14801 / SPH-1) protein is Phosphate acyltransferase.